A 466-amino-acid chain; its full sequence is MRKFMDEDFLLTNETAVKLYHQYAKDMSIYDFHCHLSPKEIYEDRRFKNITEVWLYGDHYKWRLMRANGIDEKYITGDADDYEKFVAYAKTIPMAIGNPVYHWTHLELQRYFGIYDLLNEKTAKSIWERANEVISQEDFSARNILKKSNVKVVITTDDPVDSLEYHIKLKEEKDFDIKVLPAFRPDKGLNIEKDDFLSWIKKLESASGIKITTYDDFLQALEKRIEFFHSVGCRISDHALDYVFYQKTSKQEAEKVFKKVLTEQHLTKEEIDSFKTYTMIFLGKKYAELNWVMQLHIGAMRNNNTKMYRILGPDTGYDSIGDFPIAYSLSRLLDSLEIEGALPKTILYTLNPAANYVIATMIGNFQDGKIAGKMQFGAAWWFNDNKDGIKEQLKTLANVGLLGRFVGMVTDSRSFLSYARHEYFRRILCDLIGEWVENGEVPNDIELLGKIVQDISFNNAKEYMGV.

It belongs to the metallo-dependent hydrolases superfamily. Uronate isomerase family.

It carries out the reaction D-glucuronate = D-fructuronate. The enzyme catalyses aldehydo-D-galacturonate = keto-D-tagaturonate. It functions in the pathway carbohydrate metabolism; pentose and glucuronate interconversion. This is Uronate isomerase from Caldanaerobacter subterraneus subsp. tengcongensis (strain DSM 15242 / JCM 11007 / NBRC 100824 / MB4) (Thermoanaerobacter tengcongensis).